The sequence spans 891 residues: Tubulin polyglutamylase TTLL6 (891 aa).

Disordered regions lie at residues 1–25 (MGALLLHPSRRGPAGVVASWTSSPA) and 44–106 (SQAR…KRKK). The span at 63 to 76 (SEEKGDSSKEDPKE) shows a compositional bias: basic and acidic residues. The segment covering 88 to 99 (GAQNGLQNAQQQ) has biased composition (low complexity). Residues 106–449 (KKRLVINLSS…ESCDKKKVLE (344 aa)) enclose the TTL domain. Residues K223, 229 to 230 (QG), 251 to 254 (QLYI), and 264 to 266 (KFD) each bind ATP. Q229 is an a protein binding site. R290 serves as a coordination point for L-glutamate. 312–313 (TN) contacts ATP. Residues Y314, S315, and K332 each contribute to the L-glutamate site. 3 residues coordinate Mg(2+): D395, E408, and N410. H411 provides a ligand contact to a protein. A c-MTBD region region spans residues 420 to 499 (RLDKEVKDGL…CGGFRLIYPS (80 aa)). Residue K426 coordinates L-glutamate. Disordered stretches follow at residues 546–584 (QMKKKVEMQGESAGEQVRKKGMRGWQQKQQQKDKAATQA), 607–636 (GERKNETDSSLNQEAPTEEASSVFPKLTSA), 687–711 (TTPESTTQLSISPKSPPTLAVTASS), and 800–820 (NNLSQNPSLPGECHSRSDSSG). The segment covering 687–699 (TTPESTTQLSISP) has biased composition (polar residues).

The protein belongs to the tubulin--tyrosine ligase family. In terms of assembly, found in a complex with CEP41. Mg(2+) is required as a cofactor.

It is found in the cytoplasm. Its subcellular location is the cytoskeleton. The protein localises to the cilium axoneme. It localises to the cilium basal body. The catalysed reaction is L-glutamyl-[protein] + L-glutamate + ATP = gamma-L-glutamyl-L-glutamyl-[protein] + ADP + phosphate + H(+). It carries out the reaction (L-glutamyl)(n)-gamma-L-glutamyl-L-glutamyl-[protein] + L-glutamate + ATP = (L-glutamyl)(n+1)-gamma-L-glutamyl-L-glutamyl-[protein] + ADP + phosphate + H(+). Its function is as follows. Polyglutamylase which modifies both tubulin and non-tubulin proteins, generating alpha-linked polyglutamate side chains on the gamma-carboxyl group of specific glutamate residues of target proteins. Preferentially mediates ATP-dependent long polyglutamate chain elongation over the initiation step of the polyglutamylation reaction. Preferentially modifies the alpha-tubulin tail over a beta-tail. Promotes tubulin polyglutamylation which stimulates spastin/SPAST-mediated microtubule severing, thereby regulating microtubule functions. Mediates microtubule polyglutamylation in primary cilia axoneme, which is important for ciliary structural formation and motility. Mediates microtubule polyglutamylation in motile cilia, necessary for the regulation of ciliary coordinated beating. Polyglutamylates non-tubulin protein nucleotidyltransferase CGAS, leading to CGAS DNA-binding inhibition, thereby preventing antiviral defense response. This chain is Tubulin polyglutamylase TTLL6, found in Homo sapiens (Human).